The primary structure comprises 504 residues: L-carnitine/gamma-butyrobetaine antiporter (504 aa).

12 consecutive transmembrane segments (helical) span residues 10-30 (IEPK…WLTV), 51-71 (WGWA…WLVF), 92-112 (IFMM…SIEI), 143-163 (GPLP…FFFV), 195-215 (FYLV…TPLV), 231-251 (LDAI…ACGL), 263-283 (SYLS…SFIM), 316-336 (WTVF…IFLA), 347-367 (LCFG…TVLG), 398-418 (WAAL…CFIA), 446-466 (LLVR…LLAL), and 475-495 (AIIA…LSFI).

It belongs to the BCCT transporter (TC 2.A.15) family. CaiT subfamily. Homotrimer.

Its subcellular location is the cell inner membrane. The catalysed reaction is 4-(trimethylamino)butanoate(in) + (R)-carnitine(out) = 4-(trimethylamino)butanoate(out) + (R)-carnitine(in). It functions in the pathway amine and polyamine metabolism; carnitine metabolism. Functionally, catalyzes the exchange of L-carnitine for gamma-butyrobetaine. This is L-carnitine/gamma-butyrobetaine antiporter from Escherichia coli O8 (strain IAI1).